The primary structure comprises 141 residues: VLSANDKTNVKGAWSKVGGNSGAYMGEALYRTFLSFPTTKTYFPNYDFSAGSAQIKTQGQKIADAVGLAVAHLDDMPTALSSLSDLHAHELKVDPVNFKFLCHNVLVTMAAHLGKDFTPEIHASMDKFLASVSTVLTSKYR.

One can recognise a Globin domain in the interval 1–141 (VLSANDKTNV…VSTVLTSKYR (141 aa)). The residue at position 3 (Ser-3) is a Phosphoserine. Position 7 is an N6-succinyllysine (Lys-7). The residue at position 8 (Thr-8) is a Phosphothreonine. Position 11 is an N6-succinyllysine (Lys-11). Position 16 is an N6-acetyllysine; alternate (Lys-16). Residue Lys-16 is modified to N6-succinyllysine; alternate. Tyr-24 bears the Phosphotyrosine mark. Ser-35 carries the phosphoserine modification. N6-succinyllysine is present on Lys-40. At Ser-49 the chain carries Phosphoserine. Gln-58 is a binding site for O2. Residue His-87 coordinates heme b. Thr-108 carries the phosphothreonine modification. Phosphoserine is present on residues Ser-124 and Ser-131. Residues Thr-134 and Thr-137 each carry the phosphothreonine modification. Ser-138 carries the post-translational modification Phosphoserine.

This sequence belongs to the globin family. As to quaternary structure, heterotetramer of two alpha chains and two beta chains. As to expression, red blood cells.

Functionally, involved in oxygen transport from the lung to the various peripheral tissues. In terms of biological role, hemopressin acts as an antagonist peptide of the cannabinoid receptor CNR1. Hemopressin-binding efficiently blocks cannabinoid receptor CNR1 and subsequent signaling. The polypeptide is Hemoglobin subunit alpha (HBA) (Didelphis virginiana (North American opossum)).